The sequence spans 74 residues: Anaphase-promoting complex subunit 13 (74 aa).

The tract at residues 33-53 is disordered; the sequence is LNELPEPEQDNGGTTESVKEQ.

The protein belongs to the APC13 family. As to quaternary structure, the mammalian APC/C is composed at least of 14 distinct subunits ANAPC1, ANAPC2, CDC27/APC3, ANAPC4, ANAPC5, CDC16/APC6, ANAPC7, CDC23/APC8, ANAPC10, ANAPC11, CDC26/APC12, ANAPC13, ANAPC15 and ANAPC16 that assemble into a complex of at least 19 chains with a combined molecular mass of around 1.2 MDa; APC/C interacts with FZR1 and FBXO5.

The protein localises to the nucleus. Its pathway is protein modification; protein ubiquitination. In terms of biological role, component of the anaphase promoting complex/cyclosome (APC/C), a cell cycle-regulated E3 ubiquitin ligase that controls progression through mitosis and the G1 phase of the cell cycle. The APC/C complex acts by mediating ubiquitination and subsequent degradation of target proteins: it mainly mediates the formation of 'Lys-11'-linked polyubiquitin chains and, to a lower extent, the formation of 'Lys-48'- and 'Lys-63'-linked polyubiquitin chains. The APC/C complex catalyzes assembly of branched 'Lys-11'-/'Lys-48'-linked branched ubiquitin chains on target proteins. The chain is Anaphase-promoting complex subunit 13 (ANAPC13) from Bos taurus (Bovine).